The sequence spans 302 residues: Sulfate adenylyltransferase subunit 2 (302 aa).

It belongs to the PAPS reductase family. CysD subfamily. Heterodimer composed of CysD, the smaller subunit, and CysN.

The enzyme catalyses sulfate + ATP + H(+) = adenosine 5'-phosphosulfate + diphosphate. The protein operates within sulfur metabolism; hydrogen sulfide biosynthesis; sulfite from sulfate: step 1/3. In terms of biological role, with CysN forms the ATP sulfurylase (ATPS) that catalyzes the adenylation of sulfate producing adenosine 5'-phosphosulfate (APS) and diphosphate, the first enzymatic step in sulfur assimilation pathway. APS synthesis involves the formation of a high-energy phosphoric-sulfuric acid anhydride bond driven by GTP hydrolysis by CysN coupled to ATP hydrolysis by CysD. The protein is Sulfate adenylyltransferase subunit 2 of Escherichia coli O1:K1 / APEC.